We begin with the raw amino-acid sequence, 95 residues long: Acyl carrier protein AcpXL (95 aa).

Positions 4 to 90 constitute a Carrier domain; that stretch reads TATFDKVADI…NLCAKIDELR (87 aa). Serine 39 bears the O-(pantetheine 4'-phosphoryl)serine mark.

Post-translationally, 4'-phosphopantetheine is transferred from CoA to a specific serine of apo-ACP by AcpS. This modification is essential for activity because fatty acids are bound in thioester linkage to the sulfhydryl of the prosthetic group.

The protein resides in the cytoplasm. It functions in the pathway glycolipid biosynthesis; KDO(2)-lipid A biosynthesis. Its function is as follows. Carrier of the growing fatty acid chain in fatty acid biosynthesis. Is involved in the transfer of long hydroxylated fatty acids to lipid A. The polypeptide is Acyl carrier protein AcpXL (acpXL) (Rhizobium meliloti (strain 1021) (Ensifer meliloti)).